Here is a 509-residue protein sequence, read N- to C-terminus: Protein disulfide-isomerase (509 aa).

The signal sequence occupies residues 1 to 19; the sequence is MLSRALLCLALAWAARVGA. One can recognise a Thioredoxin 1 domain in the interval 20–136; that stretch reads DALEEEDNVL…IVNWLKKRTG (117 aa). Active-site nucleophile residues include Cys-55 and Cys-58. Cys-55 and Cys-58 are joined by a disulfide. Lys-202 bears the N6-acetyllysine mark. N6-succinyllysine occurs at positions 224 and 273. Phosphoserine is present on residues Ser-333 and Ser-359. One can recognise a Thioredoxin 2 domain in the interval 335–477; sequence ELTAEKITQF…FKKFLESGGQ (143 aa). Catalysis depends on nucleophile residues Cys-399 and Cys-402. Residues Cys-399 and Cys-402 are joined by a disulfide bond. The residue at position 429 (Ser-429) is a Phosphoserine. Residues 506-509 carry the Prevents secretion from ER motif; sequence KDEL.

The protein belongs to the protein disulfide isomerase family. In terms of assembly, heterodimer; heterodimerizes with the protein microsomal triglyceride transfer MTTP. Homodimer. Monomers and homotetramers may also occur. Interacts with P4HA2, forming a heterotetramer consisting of 2 alpha subunits (P4HA2) and 2 beta (P4HB), where P4HB plays the role of a structural subunit; this tetramer catalyzes the formation of 4-hydroxyproline in collagen. Also constitutes the structural subunit of the microsomal triacylglycerol transfer protein MTTP in mammalian cells. Stabilizes both enzymes and retain them in the ER without contributing to the catalytic activity. Binds UBQLN1. Interacts with ERO1B. Interacts with ILDR2. Interacts with ERN1/IRE1A (via N-terminus); the interaction is enhanced by phosphorylation of P4HB by FAM20C in response to endoplasmic reticulum stress and results in attenuation of ERN1 activity. Phosphorylation of Ser-359 by FAM20C is induced by endoplasmic reticulum stress and results in a functional switch from oxidoreductase to molecular chaperone. It also promotes interaction with ERN1.

It is found in the endoplasmic reticulum. The protein localises to the endoplasmic reticulum lumen. The protein resides in the melanosome. It localises to the cell membrane. The enzyme catalyses Catalyzes the rearrangement of -S-S- bonds in proteins.. Functionally, this multifunctional protein catalyzes the formation, breakage and rearrangement of disulfide bonds. At the cell surface, seems to act as a reductase that cleaves disulfide bonds of proteins attached to the cell. May therefore cause structural modifications of exofacial proteins. Inside the cell, seems to form/rearrange disulfide bonds of nascent proteins. At high concentrations and following phosphorylation by FAM20C, functions as a chaperone that inhibits aggregation of misfolded proteins. At low concentrations, facilitates aggregation (anti-chaperone activity). May be involved with other chaperones in the structural modification of the TG precursor in hormone biogenesis. Also acts as a structural subunit of various enzymes such as prolyl 4-hydroxylase and microsomal triacylglycerol transfer protein MTTP. Receptor for LGALS9; the interaction retains P4HB at the cell surface of Th2 T helper cells, increasing disulfide reductase activity at the plasma membrane, altering the plasma membrane redox state and enhancing cell migration. The chain is Protein disulfide-isomerase (P4hb) from Rattus norvegicus (Rat).